The chain runs to 305 residues: D-alanine--D-alanine ligase (305 aa).

The 196-residue stretch at 105 to 300 (KMIWQAAGIN…FDELVVQILE (196 aa)) folds into the ATP-grasp domain. 131–186 (ADRLGLPLIIKPAREGSTLGLNKVDNEQDFRSAYQAAAEYDSLVLAEQFIQGIELT) lines the ATP pocket. Positions 254, 267, and 269 each coordinate Mg(2+).

It belongs to the D-alanine--D-alanine ligase family. Requires Mg(2+) as cofactor. Mn(2+) serves as cofactor.

Its subcellular location is the cytoplasm. The catalysed reaction is 2 D-alanine + ATP = D-alanyl-D-alanine + ADP + phosphate + H(+). It participates in cell wall biogenesis; peptidoglycan biosynthesis. In terms of biological role, cell wall formation. The chain is D-alanine--D-alanine ligase from Nitrosomonas europaea (strain ATCC 19718 / CIP 103999 / KCTC 2705 / NBRC 14298).